The sequence spans 594 residues: DNA mismatch repair protein MutL (594 aa).

It belongs to the DNA mismatch repair MutL/HexB family.

Functionally, this protein is involved in the repair of mismatches in DNA. It is required for dam-dependent methyl-directed DNA mismatch repair. May act as a 'molecular matchmaker', a protein that promotes the formation of a stable complex between two or more DNA-binding proteins in an ATP-dependent manner without itself being part of a final effector complex. The chain is DNA mismatch repair protein MutL from Rhizorhabdus wittichii (strain DSM 6014 / CCUG 31198 / JCM 15750 / NBRC 105917 / EY 4224 / RW1) (Sphingomonas wittichii).